Consider the following 225-residue polypeptide: Ras-related protein Rab-32 (225 aa).

The residue at position 2 (A2) is an N-acetylalanine. GTP is bound by residues V36, G37, K38, T39, S40, S51, Q52, Y54, and T57. Mg(2+) is bound at residue T39. The Switch 1 motif lies at 48–62 (QLFSQHYRATIGVDF). T57 serves as a coordination point for Mg(2+). A Phosphoserine modification is found at S71. D81 is a binding site for Mg(2+). 6 residues coordinate GTP: G84, N143, K144, D146, A175, and K176. The short motif at 84-97 (GQERFGNMTRVYYK) is the Switch 2 element. The tract at residues 178 to 197 (NINIEEAARFLVEKILVNHQ) is PKA-RII subunit binding domain. 2 S-geranylgeranyl cysteine lipidation sites follow: C224 and C225.

Belongs to the small GTPase superfamily. Rab family. Interacts with ANKRD27. A decreased interaction with ANKRD27 seen in the presence of SGSM2. Interacts with LRRK2 (via N-terminus); this interaction results in stimulation of RAB10 phosphorylation by LRRK2. Requires Mg(2+) as cofactor. Widely expressed with high levels in heart, liver, kidney, bone marrow, testis, colon and fetal lung.

It localises to the mitochondrion. It is found in the mitochondrion outer membrane. The protein localises to the cytoplasmic vesicle. Its subcellular location is the phagosome. The protein resides in the phagosome membrane. It localises to the melanosome. It is found in the melanosome membrane. The enzyme catalyses GTP + H2O = GDP + phosphate + H(+). Its activity is regulated as follows. Regulated by guanine the nucleotide exchange factor (GEF) BLOC-3 complex composed of HPS1 and HPS4 which promote the exchange of bound GDP for free GTP. Regulated by the GTPase activating protein (GAP) SGSM2/RUTBC1 which increases the GTP hydrolysis activity. Inhibited by GDP dissociation inhibitors (GDIs) which prevent Rab-GDP dissociation. Its function is as follows. The small GTPases Rab are key regulators of intracellular membrane trafficking, from the formation of transport vesicles to their fusion with membranes. Rabs cycle between an inactive GDP-bound form and an active GTP-bound form that is able to recruit to membranes different set of downstream effectors directly responsible for vesicle formation, movement, tethering and fusion. Also acts as an A-kinase anchoring protein by binding to the type II regulatory subunit of protein kinase A and anchoring it to the mitochondrion. Also involved in synchronization of mitochondrial fission. Plays a role in the maturation of phagosomes that engulf pathogens, such as S.aureus and M.tuberculosis. Plays an important role in the control of melanin production and melanosome biogenesis. In concert with RAB38, regulates the proper trafficking of melanogenic enzymes TYR, TYRP1 and DCT/TYRP2 to melanosomes in melanocytes. Stimulates phosphorylation of RAB10 'Thr-73' by LRRK2. This chain is Ras-related protein Rab-32, found in Homo sapiens (Human).